The sequence spans 301 residues: 2-(hydroxymethyl)glutarate dehydrogenase (301 aa).

NAD(+)-binding positions include 8 to 22 (GFIG…MAIN) and Ser99. Lys174 is an active-site residue. Lys243 provides a ligand contact to NAD(+).

This sequence belongs to the HIBADH-related family. Homotetramer.

The enzyme catalyses (S)-2-hydroxymethylglutarate + NAD(+) = 2-formylglutarate + NADH + H(+). It participates in cofactor degradation; nicotinate degradation; propanoate and pyruvate from 6-hydroxynicotinate: step 3/8. Functionally, catalyzes the conversion of 2-formylglutarate to (S)-2-hydroxymethylglutarate. Has very low activity with (S)-3-hydroxyisobutyrate. This Eubacterium barkeri (Clostridium barkeri) protein is 2-(hydroxymethyl)glutarate dehydrogenase.